Consider the following 445-residue polypeptide: Phosphoglucosamine mutase (445 aa).

The active-site Phosphoserine intermediate is the serine 101. Mg(2+) is bound by residues serine 101, aspartate 240, aspartate 242, and aspartate 244. Serine 101 is modified (phosphoserine).

It belongs to the phosphohexose mutase family. The cofactor is Mg(2+). Post-translationally, activated by phosphorylation.

It catalyses the reaction alpha-D-glucosamine 1-phosphate = D-glucosamine 6-phosphate. Its function is as follows. Catalyzes the conversion of glucosamine-6-phosphate to glucosamine-1-phosphate. This chain is Phosphoglucosamine mutase, found in Ectopseudomonas mendocina (strain ymp) (Pseudomonas mendocina).